Here is a 270-residue protein sequence, read N- to C-terminus: Phosphodiesterase YaeI (270 aa).

Residues D56, H58, D88, N120, H209, and H211 each coordinate a divalent metal cation.

It belongs to the metallophosphoesterase superfamily. Requires a divalent metal cation as cofactor.

In terms of biological role, shows phosphodiesterase activity, hydrolyzing phosphodiester bond in the artificial chromogenic substrate bis-p-nitrophenyl phosphate (bis-pNPP). This chain is Phosphodiesterase YaeI (yaeI), found in Escherichia coli (strain K12).